We begin with the raw amino-acid sequence, 360 residues long: S-adenosylmethionine:tRNA ribosyltransferase-isomerase (360 aa).

Belongs to the QueA family. In terms of assembly, monomer.

It is found in the cytoplasm. It catalyses the reaction 7-aminomethyl-7-carbaguanosine(34) in tRNA + S-adenosyl-L-methionine = epoxyqueuosine(34) in tRNA + adenine + L-methionine + 2 H(+). It participates in tRNA modification; tRNA-queuosine biosynthesis. In terms of biological role, transfers and isomerizes the ribose moiety from AdoMet to the 7-aminomethyl group of 7-deazaguanine (preQ1-tRNA) to give epoxyqueuosine (oQ-tRNA). The polypeptide is S-adenosylmethionine:tRNA ribosyltransferase-isomerase (Burkholderia mallei (strain NCTC 10247)).